A 217-amino-acid polypeptide reads, in one-letter code: Membrane-associated progesterone receptor component 2 (217 aa).

A glycan (O-linked (Xyl...) (chondroitin sulfate) serine) is linked at Ser-15. Residues 40-62 (ALLATGGEMLLNVALVALVLLGA) form a helical membrane-spanning segment. 3 positions are modified to phosphoserine: Ser-84, Ser-98, and Ser-202. Residues 96-195 (DFSLEQLRQY…EKYDYVGRLL (100 aa)) enclose the Cytochrome b5 heme-binding domain. The interval 196 to 217 (KPGEEPSEYTDEEDTKDHSKQD) is disordered. Over residues 200–209 (EPSEYTDEED) the composition is skewed to acidic residues. Tyr-204 is subject to Phosphotyrosine. Thr-205 carries the phosphothreonine modification.

This sequence belongs to the cytochrome b5 family. MAPR subfamily. As to quaternary structure, interacts with PGRMC1. Interacts with AAAS. Expressed in brown adipose tissue, white adipose tissue, liver, heart, skeletal muscle, brain and adrenal gland.

It localises to the membrane. Its subcellular location is the nucleus envelope. It is found in the endoplasmic reticulum. The protein resides in the secreted. In terms of biological role, required for the maintenance of uterine histoarchitecture and normal female reproductive lifespan. May serve as a universal non-classical progesterone receptor in the uterus. Intracellular heme chaperone required for delivery of labile, or signaling heme, to the nucleus. Plays a role in adipocyte function and systemic glucose homeostasis. In brown fat, which has a high demand for heme, delivery of labile heme in the nucleus regulates the activity of heme-responsive transcriptional repressors such as NR1D1 and BACH1. This chain is Membrane-associated progesterone receptor component 2, found in Mus musculus (Mouse).